We begin with the raw amino-acid sequence, 403 residues long: CinA-like protein (403 aa).

Belongs to the CinA family.

This chain is CinA-like protein, found in Petrotoga mobilis (strain DSM 10674 / SJ95).